The chain runs to 128 residues: Fluoride-specific ion channel FluC (128 aa).

The next 4 helical transmembrane spans lie at 6 to 26 (LVALGGAIGSAARFTLSGLVL), 36 to 56 (LPTFTVNIIGCLVIGMLAGLA), 68 to 88 (VLLFTGLVGGFTTFSAFGLET), and 99 to 119 (IAAAYIVSSIVVGLVLMWLGF). 2 residues coordinate Na(+): G76 and T79.

It belongs to the fluoride channel Fluc/FEX (TC 1.A.43) family.

The protein resides in the cell inner membrane. The catalysed reaction is fluoride(in) = fluoride(out). Its activity is regulated as follows. Na(+) is not transported, but it plays an essential structural role and its presence is essential for fluoride channel function. Fluoride-specific ion channel. Important for reducing fluoride concentration in the cell, thus reducing its toxicity. The chain is Fluoride-specific ion channel FluC from Methylobacillus flagellatus (strain ATCC 51484 / DSM 6875 / VKM B-1610 / KT).